A 250-amino-acid chain; its full sequence is Low affinity immunoglobulin gamma Fc region receptor III-A (250 aa).

An N-terminal signal peptide occupies residues methionine 1 to alanine 16. At aspartate 17–glutamine 208 the chain is on the extracellular side. 2 Ig-like C2-type domains span residues proline 23 to histidine 105 and proline 99 to threonine 189. 2 disulfide bridges follow: cysteine 47–cysteine 89 and cysteine 128–cysteine 172. N-linked (GlcNAc...) asparagine glycans are attached at residues asparagine 56 and asparagine 63. Asparagine 180 carries an N-linked (GlcNAc...) asparagine glycan. The chain crosses the membrane as a helical span at residues isoleucine 209–leucine 225. The Cytoplasmic segment spans residues tyrosine 226–proline 250.

In terms of assembly, forms a heterooligomeric complex with ITAM-containing signaling subunits FCER1G. Interacts (via transmembrane domain) with signaling subunits; this interaction is a prerequisite for receptor complex expression on the cell surface and intracellular signal transduction. Binds the Fc region of antigen-complexed IgG. Expressed in gamma-delta T cells.

The protein resides in the cell membrane. Its function is as follows. Receptor for the invariable Fc fragment of immunoglobulin gamma (IgG). Optimally activated upon binding of clustered antigen-IgG complexes displayed on cell surfaces, triggers lysis of antibody-coated cells, a process known as antibody-dependent cellular cytotoxicity (ADCC). Does not bind free monomeric IgG, thus avoiding inappropriate effector cell activation in the absence of antigenic trigger. Mediates IgG effector functions on natural killer (NK) cells. Binds antigen-IgG complexes generated upon infection and triggers NK cell-dependent cytokine production and degranulation to limit viral load and propagation. Fc-binding subunit that associates with FCER1G adapters to form functional signaling complexes. Following the engagement of antigen-IgG complexes, triggers phosphorylation of immunoreceptor tyrosine-based activation motif (ITAM)-containing adapter with subsequent activation of phosphatidylinositol 3-kinase signaling and sustained elevation of intracellular calcium that ultimately drive NK cell activation. Mediates enhanced ADCC in response to afucosylated IgGs. The chain is Low affinity immunoglobulin gamma Fc region receptor III-A from Bos taurus (Bovine).